Consider the following 574-residue polypeptide: Membrane protein insertase YidC (574 aa).

The chain crosses the membrane as a helical span at residues 6-26 (VFLIFAWLMVAALLWMEWGKD). The segment at 45 to 77 (RDPDAAAPSAANVPSAQPIPQAGAPGTVPATSS) is disordered. A run of 5 helical transmembrane segments spans residues 356-376 (FSIMAIIGQGLFWVLSHLHSF), 380-400 (WGWAIIGLVVLLRLALYPLSA), 447-467 (GGCLPLLIQMPIFFALYWVLV), 489-509 (PYFILPLLNISIMWATQKLTP), and 525-545 (PLVFGVMMAFMPAGLVLYWVV).

It belongs to the OXA1/ALB3/YidC family. Type 1 subfamily. Interacts with the Sec translocase complex via SecD. Specifically interacts with transmembrane segments of nascent integral membrane proteins during membrane integration.

It is found in the cell inner membrane. Functionally, required for the insertion and/or proper folding and/or complex formation of integral membrane proteins into the membrane. Involved in integration of membrane proteins that insert both dependently and independently of the Sec translocase complex, as well as at least some lipoproteins. Aids folding of multispanning membrane proteins. The chain is Membrane protein insertase YidC from Xanthomonas euvesicatoria pv. vesicatoria (strain 85-10) (Xanthomonas campestris pv. vesicatoria).